The primary structure comprises 505 residues: uncharacterized protein (505 aa).

The first 19 residues, 1–19 (MILFTAIILVASVVHVVVS), serve as a signal peptide directing secretion. The Extracellular segment spans residues 20–483 (SPQQCYYCVE…EQPNSAPRGE (464 aa)). Residues 484–504 (IHQLFRCTFVAVFIVFACFIV) traverse the membrane as a helical segment. A topological domain (cytoplasmic) is located at residue Cys-505.

Component of the acid-insoluble and acid-soluble organic matrix of the aragonitic skeleton (at protein level).

It is found in the membrane. This is an uncharacterized protein from Acropora millepora (Staghorn coral).